A 607-amino-acid chain; its full sequence is WD repeat-containing protein 1-A (607 aa).

13 WD repeats span residues 4 to 45, 48 to 87, 93 to 135, 138 to 176, 180 to 218, 224 to 263, 270 to 306, 311 to 351, 358 to 408, 432 to 474, 480 to 518, 523 to 561, and 566 to 604; these read ELKK…IRNI, PAIA…IWDT, LLKY…LWDT, SVGE…FLEG, KFKF…LYDG, VCSL…IWDV, TTFN…YLDK, RPLR…YWDA, TFTG…KMDV, LKDK…LYSI, KDEG…VFSV, SEKN…VWTL, and TRIK…QWTV.

This sequence belongs to the WD repeat AIP1 family.

It localises to the cell membrane. The protein localises to the cytoplasm. The protein resides in the cytoskeleton. It is found in the nucleus. Functionally, induces disassembly of actin filaments in conjunction with ADF/cofilin family proteins. Doesn't sever actin filaments alone, but caps the barbed ends of filaments severed by cofilin, which blocks annealing and depolymerization and allows more extensive severing by cofilin. The sequence is that of WD repeat-containing protein 1-A (wdr1-a) from Xenopus laevis (African clawed frog).